Reading from the N-terminus, the 447-residue chain is Exodeoxyribonuclease 7 large subunit (447 aa).

The protein belongs to the XseA family. Heterooligomer composed of large and small subunits.

The protein resides in the cytoplasm. The enzyme catalyses Exonucleolytic cleavage in either 5'- to 3'- or 3'- to 5'-direction to yield nucleoside 5'-phosphates.. Its function is as follows. Bidirectionally degrades single-stranded DNA into large acid-insoluble oligonucleotides, which are then degraded further into small acid-soluble oligonucleotides. The polypeptide is Exodeoxyribonuclease 7 large subunit (Lactiplantibacillus plantarum (strain ATCC BAA-793 / NCIMB 8826 / WCFS1) (Lactobacillus plantarum)).